Here is a 215-residue protein sequence, read N- to C-terminus: Large ribosomal subunit protein bL25 (215 aa).

A disordered region spans residues 170-215 (DPDTSVASVTPPTTEEDLDTDDVDENAEPELVGAENDSADEESENK). Composition is skewed to acidic residues over residues 183 to 197 (TEEDLDTDDVDENAE) and 206 to 215 (DSADEESENK).

It belongs to the bacterial ribosomal protein bL25 family. CTC subfamily. As to quaternary structure, part of the 50S ribosomal subunit; part of the 5S rRNA/L5/L18/L25 subcomplex. Contacts the 5S rRNA. Binds to the 5S rRNA independently of L5 and L18.

Functionally, this is one of the proteins that binds to the 5S RNA in the ribosome where it forms part of the central protuberance. In Oceanobacillus iheyensis (strain DSM 14371 / CIP 107618 / JCM 11309 / KCTC 3954 / HTE831), this protein is Large ribosomal subunit protein bL25.